The primary structure comprises 340 residues: Sulfotransferase 2B1 (340 aa).

67-72 (KSGTNW) provides a ligand contact to 3'-phosphoadenylyl sulfate. The substrate site is built by W95 and W100. H122 (proton acceptor) is an active-site residue. 3'-phosphoadenylyl sulfate contacts are provided by residues R144, S152, Y207, 241–246 (SAFAAM), and 271–273 (RKG). The disordered stretch occupies residues 301 to 340 (LPSFPWDRSAEDGSPDGETEPSPSPSPGLASDDPNPGSSQ).

This sequence belongs to the sulfotransferase 1 family. Isoform 1 is expressed in skin and testis. Higher level of isoform 2 expressed in skin and intestine, moderate level in the kidney, low level in liver, stomach and placenta.

Its subcellular location is the cytoplasm. The protein localises to the cytosol. It is found in the microsome. It localises to the nucleus. It catalyses the reaction an alcohol + 3'-phosphoadenylyl sulfate = an alkyl sulfate + adenosine 3',5'-bisphosphate + H(+). The catalysed reaction is pregnenolone + 3'-phosphoadenylyl sulfate = pregnenolone sulfate + adenosine 3',5'-bisphosphate + H(+). It carries out the reaction 3beta-hydroxyandrost-5-en-17-one + 3'-phosphoadenylyl sulfate = dehydroepiandrosterone 3-sulfate + adenosine 3',5'-bisphosphate + H(+). The enzyme catalyses cholesterol + 3'-phosphoadenylyl sulfate = cholesterol sulfate + adenosine 3',5'-bisphosphate + H(+). In terms of biological role, sulfotransferase that utilizes 3'-phospho-5'-adenylyl sulfate (PAPS) as sulfonate donor to catalyze the sulfate conjugation. Sulfonation increases the water solubility of most compounds, and therefore their renal excretion, but it can also result in bioactivation to form active metabolites. Sulfonates cholesterol. Catalyzes sulfation of the 3beta-hydroxyl groups of steroids, such as, pregnenolone and dehydroepiandrosterone (DHEA). Conjugates efficiently cholesterol but has a greater affinity for pregnenolone sulfation. Does not show high activity with DHEA. Plays a role in epidermal cholesterol metabolism and in the regulation of epidermal proliferation and differentiation. Prefers pregnenolone over DHEA as a substrate and does not sulfate cholesterol. This chain is Sulfotransferase 2B1, found in Rattus norvegicus (Rat).